We begin with the raw amino-acid sequence, 264 residues long: 3-methyl-2-oxobutanoate hydroxymethyltransferase (264 aa).

2 residues coordinate Mg(2+): Asp45 and Asp84. Residues Asp45 to Ser46, Asp84, and Lys112 each bind 3-methyl-2-oxobutanoate. Position 114 (Glu114) interacts with Mg(2+). Catalysis depends on Glu181, which acts as the Proton acceptor.

It belongs to the PanB family. In terms of assembly, homodecamer; pentamer of dimers. Requires Mg(2+) as cofactor.

The protein localises to the cytoplasm. It carries out the reaction 3-methyl-2-oxobutanoate + (6R)-5,10-methylene-5,6,7,8-tetrahydrofolate + H2O = 2-dehydropantoate + (6S)-5,6,7,8-tetrahydrofolate. The protein operates within cofactor biosynthesis; (R)-pantothenate biosynthesis; (R)-pantoate from 3-methyl-2-oxobutanoate: step 1/2. Catalyzes the reversible reaction in which hydroxymethyl group from 5,10-methylenetetrahydrofolate is transferred onto alpha-ketoisovalerate to form ketopantoate. In Vibrio vulnificus (strain YJ016), this protein is 3-methyl-2-oxobutanoate hydroxymethyltransferase.